The sequence spans 145 residues: Anaerobic nitrite reductase NSHB5 (145 aa).

The Globin domain maps to 2–142 (GFSETQEELV…LAAAIKEEMK (141 aa)). Residues 35–39 (EIAPA) carry the Homodimerization motif. Positions 45, 59, 61, 84, 88, and 89 each coordinate heme b. A Homodimerization motif is present at residues 96–108 (DAHFEVVKTALLD).

The protein belongs to the plant globin family. In terms of assembly, homodimer. Heme b serves as cofactor. Expressed in embryonic (embryos, coleoptiles and seminal roots) and vegetative (leaves and roots) organs.

It localises to the cytoplasm. The protein localises to the nucleus. It catalyses the reaction Fe(III)-heme b-[protein] + nitric oxide + H2O = Fe(II)-heme b-[protein] + nitrite + 2 H(+). Its function is as follows. Phytoglobin that reduces nitrite to nitric oxide under anoxic conditions (e.g. during flooding or in waterlogged soil). May not function as an oxygen storage or transport protein. Has an unusually high affinity for O(2) through an hexacoordinate heme iron because of a very low dissociation constant. This is Anaerobic nitrite reductase NSHB5 from Oryza sativa subsp. indica (Rice).